Here is a 197-residue protein sequence, read N- to C-terminus: Zinc finger protein 581 (197 aa).

Positions 1 to 10 (MLVLPSPCPQ) are enriched in pro residues. Residues 1–52 (MLVLPSPCPQPLAFSSVETMEGPPRRTCRSPEPGPSSSIGSPQASSPPRPNH) form a disordered region. The span at 35-44 (PSSSIGSPQA) shows a compositional bias: low complexity. C2H2-type zinc fingers lie at residues 87–109 (YSCP…SITH), 115–137 (FECD…HSIH), 145–167 (HGCP…SRVH), and 173–196 (FQCP…RWKH).

Its subcellular location is the nucleus. May be involved in transcriptional regulation. This chain is Zinc finger protein 581 (ZNF581), found in Homo sapiens (Human).